A 290-amino-acid polypeptide reads, in one-letter code: Glutamate racemase (290 aa).

Substrate contacts are provided by residues 32 to 33 (DS) and 64 to 65 (YG). Cys-96 (proton donor/acceptor) is an active-site residue. Residue 97 to 98 (NT) coordinates substrate. Cys-208 functions as the Proton donor/acceptor in the catalytic mechanism. 209 to 210 (TH) is a binding site for substrate.

The protein belongs to the aspartate/glutamate racemases family.

It catalyses the reaction L-glutamate = D-glutamate. It functions in the pathway cell wall biogenesis; peptidoglycan biosynthesis. Functionally, provides the (R)-glutamate required for cell wall biosynthesis. This Sodalis glossinidius (strain morsitans) protein is Glutamate racemase.